A 426-amino-acid chain; its full sequence is Mannose-6-phosphate isomerase (426 aa).

The Zn(2+) site is built by Q112, H114, E139, and H277. R296 is an active-site residue.

Belongs to the mannose-6-phosphate isomerase type 1 family. Requires Zn(2+) as cofactor.

The protein localises to the cytoplasm. It catalyses the reaction D-mannose 6-phosphate = D-fructose 6-phosphate. Its pathway is nucleotide-sugar biosynthesis; GDP-alpha-D-mannose biosynthesis; alpha-D-mannose 1-phosphate from D-fructose 6-phosphate: step 1/2. In terms of biological role, involved in the synthesis of the GDP-mannose and dolichol-phosphate-mannose required for a number of critical mannosyl transfer reactions. The sequence is that of Mannose-6-phosphate isomerase (PMI40) from Ogataea parapolymorpha (strain ATCC 26012 / BCRC 20466 / JCM 22074 / NRRL Y-7560 / DL-1) (Yeast).